Here is a 209-residue protein sequence, read N- to C-terminus: Glycerol-3-phosphate acyltransferase (209 aa).

The next 5 helical transmembrane spans lie at N8–A28, V78–I98, V124–A144, I149–H169, and P170–Y190.

Belongs to the PlsY family. Probably interacts with PlsX.

Its subcellular location is the cell inner membrane. The enzyme catalyses an acyl phosphate + sn-glycerol 3-phosphate = a 1-acyl-sn-glycero-3-phosphate + phosphate. It functions in the pathway lipid metabolism; phospholipid metabolism. In terms of biological role, catalyzes the transfer of an acyl group from acyl-phosphate (acyl-PO(4)) to glycerol-3-phosphate (G3P) to form lysophosphatidic acid (LPA). This enzyme utilizes acyl-phosphate as fatty acyl donor, but not acyl-CoA or acyl-ACP. This chain is Glycerol-3-phosphate acyltransferase, found in Nitratiruptor sp. (strain SB155-2).